Here is a 307-residue protein sequence, read N- to C-terminus: Replication termination factor 2 (307 aa).

The tract at residues 193–296 (AKLEKKTKKP…SSAKRSKEES (104 aa)) is disordered. Residues 227–241 (GKPEEADPDPREKKS) show a composition bias toward basic and acidic residues. S288 is modified (phosphoserine).

The protein belongs to the rtf2 family. Interacts with DDI2; probably also interacts with DDI1. Undergoes proteasomal degradation, via DDI1 and DDI2. Removal from stalled replisomes and degradation are required for genome stability.

It localises to the chromosome. Its function is as follows. Replication termination factor which is a component of the elongating replisome. Required for ATR pathway signaling upon DNA damage and has a positive activity during DNA replication. Might function to facilitate fork pausing at replication fork barriers like the rDNA. May be globally required to stimulate ATR signaling after the fork stalls or encounters a lesion. Interacts with nascent DNA. The protein is Replication termination factor 2 of Mus musculus (Mouse).